We begin with the raw amino-acid sequence, 1331 residues long: Serine/threonine-protein kinase SSK22 (1331 aa).

Positions 1034 to 1310 (WQKRSFIGGG…AVELLIDPWM (277 aa)) constitute a Protein kinase domain. ATP is bound by residues 1040–1048 (IGGGTFGQV) and K1063. D1158 acts as the Proton acceptor in catalysis.

This sequence belongs to the protein kinase superfamily. STE Ser/Thr protein kinase family. MAP kinase kinase kinase subfamily. Interacts with by SSK1.

It catalyses the reaction L-seryl-[protein] + ATP = O-phospho-L-seryl-[protein] + ADP + H(+). It carries out the reaction L-threonyl-[protein] + ATP = O-phospho-L-threonyl-[protein] + ADP + H(+). In terms of biological role, kinase involved in a signal transduction pathway that is activated by changes in the osmolarity of the extracellular environment. Activates the PBS2 MAP kinase kinase by phosphorylation. The sequence is that of Serine/threonine-protein kinase SSK22 (SSK22) from Saccharomyces cerevisiae (strain ATCC 204508 / S288c) (Baker's yeast).